The chain runs to 447 residues: Gamma-glutamyl phosphate reductase (447 aa).

Belongs to the gamma-glutamyl phosphate reductase family.

The protein resides in the cytoplasm. The enzyme catalyses L-glutamate 5-semialdehyde + phosphate + NADP(+) = L-glutamyl 5-phosphate + NADPH + H(+). Its pathway is amino-acid biosynthesis; L-proline biosynthesis; L-glutamate 5-semialdehyde from L-glutamate: step 2/2. Catalyzes the NADPH-dependent reduction of L-glutamate 5-phosphate into L-glutamate 5-semialdehyde and phosphate. The product spontaneously undergoes cyclization to form 1-pyrroline-5-carboxylate. The protein is Gamma-glutamyl phosphate reductase of Methanosarcina mazei (strain ATCC BAA-159 / DSM 3647 / Goe1 / Go1 / JCM 11833 / OCM 88) (Methanosarcina frisia).